Consider the following 392-residue polypeptide: Large ribosomal subunit protein uL3 (392 aa).

It belongs to the universal ribosomal protein uL3 family. Component of the large ribosomal subunit (LSU). Mature N.crassa ribosomes consist of a small (40S) and a large (60S) subunit. The 40S small subunit contains 1 molecule of ribosomal RNA (18S rRNA) and at least 32 different proteins. The large 60S subunit contains 3 rRNA molecules (26S, 5.8S and 5S rRNA) and at least 42 different proteins.

The protein resides in the cytoplasm. Functionally, component of the ribosome, a large ribonucleoprotein complex responsible for the synthesis of proteins in the cell. The small ribosomal subunit (SSU) binds messenger RNAs (mRNAs) and translates the encoded message by selecting cognate aminoacyl-transfer RNA (tRNA) molecules. The large subunit (LSU) contains the ribosomal catalytic site termed the peptidyl transferase center (PTC), which catalyzes the formation of peptide bonds, thereby polymerizing the amino acids delivered by tRNAs into a polypeptide chain. The nascent polypeptides leave the ribosome through a tunnel in the LSU and interact with protein factors that function in enzymatic processing, targeting, and the membrane insertion of nascent chains at the exit of the ribosomal tunnel. This chain is Large ribosomal subunit protein uL3 (rpl-3), found in Neurospora crassa (strain ATCC 24698 / 74-OR23-1A / CBS 708.71 / DSM 1257 / FGSC 987).